We begin with the raw amino-acid sequence, 493 residues long: Cell division protein FtsA (493 aa).

The segment at 434–468 (AHQSNPTPHIHSSPTERNLSDLKTPSAPLNTAKND) is disordered. Positions 436–465 (QSNPTPHIHSSPTERNLSDLKTPSAPLNTA) are enriched in polar residues.

The protein belongs to the FtsA/MreB family. Self-interacts. Interacts with FtsZ.

The protein resides in the cell inner membrane. Functionally, cell division protein that is involved in the assembly of the Z ring. May serve as a membrane anchor for the Z ring. This Helicobacter pylori (strain J99 / ATCC 700824) (Campylobacter pylori J99) protein is Cell division protein FtsA.